Consider the following 84-residue polypeptide: Large ribosomal subunit protein bL27 (84 aa).

The tract at residues 1–22 (MAHKKAGGSTRNGRDSESKRLG) is disordered.

It belongs to the bacterial ribosomal protein bL27 family.

The chain is Large ribosomal subunit protein bL27 from Shewanella frigidimarina (strain NCIMB 400).